Here is a 294-residue protein sequence, read N- to C-terminus: MKTKIIVIVGPTAVGKTALAIEVAKRFNGEVVSGDSQQVYRGLDIGTAKASPEEQAAVPHHLIDVREITESYSAFDFVSEAKMTIEGIHNRGKLAIIAGGTGLYIQSLLEGYHLGGETPHEEILAYRASLEPYSDEELAHLVDQAGLEIPQFNRRRAMRALEIAHFGQDLENQETLYEPLIICLDDERSQLYERINHRVDLMFEAGLLDEAKWLFDHSPNVQAAKGIGYKELFPYFRGEQTLEEASESLKQATRRFAKRQLTWFRNRMQVTFYQIGESGVQDRILSQIEEFLDD.

Position 10 to 17 (Gly10 to Thr17) interacts with ATP. Residue Thr12–Thr17 coordinates substrate. The interval Asp35 to Gln38 is interaction with substrate tRNA.

The protein belongs to the IPP transferase family. In terms of assembly, monomer. Requires Mg(2+) as cofactor.

The enzyme catalyses adenosine(37) in tRNA + dimethylallyl diphosphate = N(6)-dimethylallyladenosine(37) in tRNA + diphosphate. Catalyzes the transfer of a dimethylallyl group onto the adenine at position 37 in tRNAs that read codons beginning with uridine, leading to the formation of N6-(dimethylallyl)adenosine (i(6)A). This chain is tRNA dimethylallyltransferase, found in Streptococcus pneumoniae serotype 4 (strain ATCC BAA-334 / TIGR4).